A 468-amino-acid chain; its full sequence is Glutamyl-tRNA reductase (468 aa).

Residues 49-52 (TCNR), Ser109, 114-116 (EQQ), and Gln120 contribute to the substrate site. Catalysis depends on Cys50, which acts as the Nucleophile. Position 189-194 (189-194 (GAGAMG)) interacts with NADP(+). Residues 443-468 (VPSGFDAESRRGGGDMQSSPKRSPSN) are disordered. Residues 458-468 (MQSSPKRSPSN) are compositionally biased toward polar residues.

This sequence belongs to the glutamyl-tRNA reductase family. In terms of assembly, homodimer.

The enzyme catalyses (S)-4-amino-5-oxopentanoate + tRNA(Glu) + NADP(+) = L-glutamyl-tRNA(Glu) + NADPH + H(+). The protein operates within porphyrin-containing compound metabolism; protoporphyrin-IX biosynthesis; 5-aminolevulinate from L-glutamyl-tRNA(Glu): step 1/2. Catalyzes the NADPH-dependent reduction of glutamyl-tRNA(Glu) to glutamate 1-semialdehyde (GSA). The sequence is that of Glutamyl-tRNA reductase from Mycobacterium tuberculosis (strain ATCC 25177 / H37Ra).